A 252-amino-acid polypeptide reads, in one-letter code: Isoprenyl transferase (252 aa).

The active site involves aspartate 32. Mg(2+) is bound at residue aspartate 32. Residues glycine 33–arginine 36, tryptophan 37, arginine 45, histidine 49, and serine 77–glutamate 79 contribute to the substrate site. Asparagine 80 (proton acceptor) is an active-site residue. Residues tryptophan 81, arginine 83, arginine 200, and arginine 206 to serine 208 each bind substrate. Glutamate 219 contributes to the Mg(2+) binding site.

This sequence belongs to the UPP synthase family. As to quaternary structure, homodimer. Mg(2+) is required as a cofactor.

Functionally, catalyzes the condensation of isopentenyl diphosphate (IPP) with allylic pyrophosphates generating different type of terpenoids. This is Isoprenyl transferase from Listeria innocua serovar 6a (strain ATCC BAA-680 / CLIP 11262).